Here is a 434-residue protein sequence, read N- to C-terminus: Serine hydroxymethyltransferase (434 aa).

Residues leucine 128 and 132-134 contribute to the (6S)-5,6,7,8-tetrahydrofolate site; that span reads GHL. Lysine 237 is subject to N6-(pyridoxal phosphate)lysine.

It belongs to the SHMT family. In terms of assembly, homodimer. It depends on pyridoxal 5'-phosphate as a cofactor.

The protein localises to the cytoplasm. The enzyme catalyses (6R)-5,10-methylene-5,6,7,8-tetrahydrofolate + glycine + H2O = (6S)-5,6,7,8-tetrahydrofolate + L-serine. Its pathway is one-carbon metabolism; tetrahydrofolate interconversion. It participates in amino-acid biosynthesis; glycine biosynthesis; glycine from L-serine: step 1/1. In terms of biological role, catalyzes the reversible interconversion of serine and glycine with tetrahydrofolate (THF) serving as the one-carbon carrier. This reaction serves as the major source of one-carbon groups required for the biosynthesis of purines, thymidylate, methionine, and other important biomolecules. Also exhibits THF-independent aldolase activity toward beta-hydroxyamino acids, producing glycine and aldehydes, via a retro-aldol mechanism. In Corynebacterium glutamicum (strain R), this protein is Serine hydroxymethyltransferase.